Consider the following 74-residue polypeptide: Capsid protein VP2 (74 aa).

The protein resides in the virion. Its function is as follows. This extremely basic protein may tightly bind to SSV1 DNA. Essential for virus function. This is Capsid protein VP2 (VP2) from Saccharolobus solfataricus (Sulfolobus solfataricus).